A 128-amino-acid chain; its full sequence is Sm-like protein LSM1B (128 aa).

The 76-residue stretch at 10 to 85 (YLSTSLASYL…VVLIGELDTE (76 aa)) folds into the Sm domain.

The protein belongs to the snRNP Sm proteins family. In terms of assembly, component of the heptameric LSM1-LSM7 complex that forms a seven-membered ring structure with a donut shape. The LSM subunits are arranged in the order LSM1, LSM2, LSM3, LSM6, LSM5, LSM7 and LSM4. LSM1B subunit interacts only with its two neighboring subunits, LSM2 and LSM4. Expressed in roots, leaves, stems, flowers and siliques.

Its subcellular location is the cytoplasm. It localises to the P-body. In terms of biological role, component of the cytoplasmic LSM1-LSM7 complex which is involved in mRNA degradation by promoting decapping and leading to accurate 5'-3' mRNA decay. LSM1A and LSM1B are essential for the formation of the cytoplasmic LSM1-LSM7 complex which regulates developmental gene expression by the decapping of specific development-related transcripts. Required for P-body formation during heat stress. In Arabidopsis thaliana (Mouse-ear cress), this protein is Sm-like protein LSM1B.